Reading from the N-terminus, the 285-residue chain is Hydroxyethylthiazole kinase 1 (285 aa).

Methionine 48 contributes to the substrate binding site. ATP is bound by residues arginine 124 and serine 183. Glycine 210 provides a ligand contact to substrate.

Belongs to the Thz kinase family. Requires Mg(2+) as cofactor.

It catalyses the reaction 5-(2-hydroxyethyl)-4-methylthiazole + ATP = 4-methyl-5-(2-phosphooxyethyl)-thiazole + ADP + H(+). It participates in cofactor biosynthesis; thiamine diphosphate biosynthesis; 4-methyl-5-(2-phosphoethyl)-thiazole from 5-(2-hydroxyethyl)-4-methylthiazole: step 1/1. In terms of biological role, catalyzes the phosphorylation of the hydroxyl group of 4-methyl-5-beta-hydroxyethylthiazole (THZ). In Methanosphaera stadtmanae (strain ATCC 43021 / DSM 3091 / JCM 11832 / MCB-3), this protein is Hydroxyethylthiazole kinase 1.